A 209-amino-acid polypeptide reads, in one-letter code: Uridine kinase (209 aa).

Residue 12 to 19 (GGSGSGKT) participates in ATP binding.

Belongs to the uridine kinase family.

The protein localises to the cytoplasm. It catalyses the reaction uridine + ATP = UMP + ADP + H(+). The enzyme catalyses cytidine + ATP = CMP + ADP + H(+). It functions in the pathway pyrimidine metabolism; CTP biosynthesis via salvage pathway; CTP from cytidine: step 1/3. The protein operates within pyrimidine metabolism; UMP biosynthesis via salvage pathway; UMP from uridine: step 1/1. This Listeria welshimeri serovar 6b (strain ATCC 35897 / DSM 20650 / CCUG 15529 / CIP 8149 / NCTC 11857 / SLCC 5334 / V8) protein is Uridine kinase.